We begin with the raw amino-acid sequence, 199 residues long: NAD(P)H dehydrogenase (quinone) (199 aa).

One can recognise a Flavodoxin-like domain in the interval 4-190; that stretch reads MLVLYYSAYG…DGARFQGRRV (187 aa). FMN contacts are provided by residues 10–15 and 78–80; these read SAYGHM and TRY. Tyr-12 contributes to the NAD(+) binding site. Residue Trp-98 coordinates substrate. Residues 113 to 119 and His-134 each bind FMN; that span reads STATQYG. Residues 162 to 181 are disordered; that stretch reads GMTTTADGDGSRQPSAQELD. Residues 163–177 show a composition bias toward polar residues; the sequence is MTTTADGDGSRQPSA.

The protein belongs to the WrbA family. Requires FMN as cofactor.

The enzyme catalyses a quinone + NADH + H(+) = a quinol + NAD(+). The catalysed reaction is a quinone + NADPH + H(+) = a quinol + NADP(+). This chain is NAD(P)H dehydrogenase (quinone), found in Brucella suis (strain ATCC 23445 / NCTC 10510).